A 705-amino-acid polypeptide reads, in one-letter code: Cell cycle serine/threonine-protein kinase CDC5/MSD2 (705 aa).

T23 bears the Phosphothreonine mark. Residues 41–53 show a composition bias toward basic and acidic residues; the sequence is QTKRLDPNNDHHH. The interval 41–63 is disordered; it reads QTKRLDPNNDHHHQPAQKKKREK. Positions 82-337 constitute a Protein kinase domain; the sequence is YHRGHFLGEG…LTEIMDYVWF (256 aa). ATP contacts are provided by residues 88-96 and K110; that span reads LGEGGFARC. The Proton acceptor role is filled by D204. Phosphoserine is present on S419. Residues 513 to 595 enclose the POLO box 1 domain; it reads IVTKWVDYSN…VDFFAKYMKA (83 aa). 4 residues coordinate Zn(2+): E553, H569, H609, and D612. The 87-residue stretch at 614–700 folds into the POLO box 2 domain; the sequence is FLRRYTRYKP…IKEGLKQKST (87 aa).

It belongs to the protein kinase superfamily. Ser/Thr protein kinase family. CDC5/Polo subfamily. Interacts with CDC48; the interaction is likely to result in CDC5 degradation. Interacts with CSA1.

Its subcellular location is the cytoplasm. It localises to the cytoskeleton. The protein localises to the microtubule organizing center. The protein resides in the spindle pole body. It carries out the reaction L-seryl-[protein] + ATP = O-phospho-L-seryl-[protein] + ADP + H(+). The catalysed reaction is L-threonyl-[protein] + ATP = O-phospho-L-threonyl-[protein] + ADP + H(+). In terms of biological role, protein kinase required for the cell cycle where it is involved in mitotic exit. A component of the fear (CDC14 early anaphase release) network which promotes CDC14 release from the nucleolus during early anaphase. Phosphorylates SCC1/MCD1 and NET1. This Saccharomyces cerevisiae (strain ATCC 204508 / S288c) (Baker's yeast) protein is Cell cycle serine/threonine-protein kinase CDC5/MSD2 (CDC5).